A 572-amino-acid chain; its full sequence is Dihydroxy-acid dehydratase (572 aa).

Asp78 lines the Mg(2+) pocket. Cys119 lines the [2Fe-2S] cluster pocket. Mg(2+)-binding residues include Asp120 and Lys121. N6-carboxylysine is present on Lys121. Residue Cys192 coordinates [2Fe-2S] cluster. Glu459 is a Mg(2+) binding site. Residue Ser485 is the Proton acceptor of the active site.

Belongs to the IlvD/Edd family. Homodimer. It depends on [2Fe-2S] cluster as a cofactor. Mg(2+) is required as a cofactor.

It catalyses the reaction (2R)-2,3-dihydroxy-3-methylbutanoate = 3-methyl-2-oxobutanoate + H2O. It carries out the reaction (2R,3R)-2,3-dihydroxy-3-methylpentanoate = (S)-3-methyl-2-oxopentanoate + H2O. It functions in the pathway amino-acid biosynthesis; L-isoleucine biosynthesis; L-isoleucine from 2-oxobutanoate: step 3/4. The protein operates within amino-acid biosynthesis; L-valine biosynthesis; L-valine from pyruvate: step 3/4. In terms of biological role, functions in the biosynthesis of branched-chain amino acids. Catalyzes the dehydration of (2R,3R)-2,3-dihydroxy-3-methylpentanoate (2,3-dihydroxy-3-methylvalerate) into 2-oxo-3-methylpentanoate (2-oxo-3-methylvalerate) and of (2R)-2,3-dihydroxy-3-methylbutanoate (2,3-dihydroxyisovalerate) into 2-oxo-3-methylbutanoate (2-oxoisovalerate), the penultimate precursor to L-isoleucine and L-valine, respectively. This is Dihydroxy-acid dehydratase from Helicobacter hepaticus (strain ATCC 51449 / 3B1).